Here is a 446-residue protein sequence, read N- to C-terminus: Probable glycine dehydrogenase (decarboxylating) subunit 1 (446 aa).

This sequence belongs to the GcvP family. N-terminal subunit subfamily. The glycine cleavage system is composed of four proteins: P, T, L and H. In this organism, the P 'protein' is a heterodimer of two subunits.

The catalysed reaction is N(6)-[(R)-lipoyl]-L-lysyl-[glycine-cleavage complex H protein] + glycine + H(+) = N(6)-[(R)-S(8)-aminomethyldihydrolipoyl]-L-lysyl-[glycine-cleavage complex H protein] + CO2. In terms of biological role, the glycine cleavage system catalyzes the degradation of glycine. The P protein binds the alpha-amino group of glycine through its pyridoxal phosphate cofactor; CO(2) is released and the remaining methylamine moiety is then transferred to the lipoamide cofactor of the H protein. This is Probable glycine dehydrogenase (decarboxylating) subunit 1 from Methylocella silvestris (strain DSM 15510 / CIP 108128 / LMG 27833 / NCIMB 13906 / BL2).